A 178-amino-acid polypeptide reads, in one-letter code: Deoxycytidylate deaminase (178 aa).

Residues 14-145 form the CMP/dCMP-type deaminase domain; sequence EWPEYFMAVA…EETTAARLLF (132 aa). Residue histidine 84 coordinates Zn(2+). Catalysis depends on glutamate 86, which acts as the Proton donor. Residues cysteine 110 and cysteine 113 each contribute to the Zn(2+) site. Serine 174 is subject to Phosphoserine.

This sequence belongs to the cytidine and deoxycytidylate deaminase family. In terms of assembly, homohexamer. It depends on Zn(2+) as a cofactor.

It catalyses the reaction dCMP + H2O + H(+) = dUMP + NH4(+). It carries out the reaction 5-hydroxymethyl-dCMP + H2O + H(+) = 5-hydroxymethyl-dUMP + NH4(+). Allosteric enzyme whose activity is greatly influenced by the end products of its metabolic pathway, dCTP and dTTP. Catalyzes the deamination of dCMP to dUMP, providing the nucleoside monophosphate substrate for the thymidylate synthase/TYMS. Also, part of a nucleotide salvage pathway that eliminates epigenetically modified 5-hydroxymethyl-dCMP (hmdCMP) in a two-step process entailing deamination to cytotoxic 5-hydroxymethyl-dUMP (hmdUMP), followed by its hydrolysis into 5-hydroxymethyluracil (hmU) and 2-deoxy-D-ribose 5-phosphate (deoxyribosephosphate). Catalyzes the first step in that pathway, the deamination of 5-hydroxymethyl-dCMP (hmdCMP). The sequence is that of Deoxycytidylate deaminase from Mus musculus (Mouse).